A 630-amino-acid chain; its full sequence is Alpha-1,4-glucan:maltose-1-phosphate maltosyltransferase (630 aa).

Positions 234, 294, and 329 each coordinate alpha-maltose 1-phosphate. The active-site Nucleophile is the D365. Position 366 (N366) interacts with alpha-maltose 1-phosphate. Catalysis depends on E394, which acts as the Proton donor. 504–505 (KY) contributes to the alpha-maltose 1-phosphate binding site.

The protein belongs to the glycosyl hydrolase 13 family. GlgE subfamily. As to quaternary structure, homodimer.

It catalyses the reaction alpha-maltose 1-phosphate + [(1-&gt;4)-alpha-D-glucosyl](n) = [(1-&gt;4)-alpha-D-glucosyl](n+2) + phosphate. Its function is as follows. Maltosyltransferase that uses maltose 1-phosphate (M1P) as the sugar donor to elongate linear or branched alpha-(1-&gt;4)-glucans. Is involved in a branched alpha-glucan biosynthetic pathway from trehalose, together with TreS, Mak and GlgB. The chain is Alpha-1,4-glucan:maltose-1-phosphate maltosyltransferase from Picrophilus torridus (strain ATCC 700027 / DSM 9790 / JCM 10055 / NBRC 100828 / KAW 2/3).